The following is a 644-amino-acid chain: Macrolide export ATP-binding/permease protein MacB (644 aa).

The region spanning 7–245 is the ABC transporter domain; the sequence is IELQDITRSF…IPETDQNGRR (239 aa). 43-50 is an ATP binding site; it reads GPSGSGKS. The next 4 helical transmembrane spans lie at 271 to 291, 526 to 546, 570 to 590, and 607 to 627; these read ALTLLGIVIGVASVITMLAIG, IAAISLLVGGIGVMNIMLVSV, FLTEAWLVSAIGGLIGVVIGI, and LLPMALAFGCAFATGLLFGFL.

This sequence belongs to the ABC transporter superfamily. Macrolide exporter (TC 3.A.1.122) family. Homodimer. Part of the tripartite efflux system MacAB-TolC, which is composed of an inner membrane transporter, MacB, a periplasmic membrane fusion protein, MacA, and an outer membrane component, TolC. The complex forms a large protein conduit and can translocate molecules across both the inner and outer membranes. Interacts with MacA.

The protein resides in the cell inner membrane. Part of the tripartite efflux system MacAB-TolC. MacB is a non-canonical ABC transporter that contains transmembrane domains (TMD), which form a pore in the inner membrane, and an ATP-binding domain (NBD), which is responsible for energy generation. Confers resistance against macrolides. This chain is Macrolide export ATP-binding/permease protein MacB, found in Marinobacter nauticus (strain ATCC 700491 / DSM 11845 / VT8) (Marinobacter aquaeolei).